The chain runs to 510 residues: MPLSLGAEMWGPEAWLLLLLLLASFTGRCPAGELETSDVVTVVLGQDAKLPCFYRGDSGEQVGQVAWARVDAGEGAQELALLHSKYGLHVSPAYEGRVEQPPPPRNPLDGSVLLRNAVQADEGEYECRVSTFPAGSFQARLRLRVLVPPLPSLNPGPALEEGQGLTLAASCTAEGSPAPSVTWDTEVKGTTSSRSFKHSRSAAVTSEFHLVPSRSMNGQPLTCVVSHPGLLQDQRITHILHVSFLAEASVRGLEDQNLWHIGREGAMLKCLSEGQPPPSYNWTRLDGPLPSGVRVDGDTLGFPPLTTEHSGIYVCHVSNEFSSRDSQVTVDVLDPQEDSGKQVDLVSASVVVVGVIAALLFCLLVVVVVLMSRYHRRKAQQMTQKYEEELTLTRENSIRRLHSHHTDPRSQPEESVGLRAEGHPDSLKDNSSCSVMSEEPEGRSYSTLTTVREIETQTELLSPGSGRAEEEEDQDEGIKQAMNHFVQENGTLRAKPTGNGIYINGRGHLV.

An N-terminal signal peptide occupies residues 1-31 (MPLSLGAEMWGPEAWLLLLLLLASFTGRCPA). In terms of domain architecture, Ig-like V-type spans 32-144 (GELETSDVVT…GSFQARLRLR (113 aa)). Residues 32-349 (GELETSDVVT…GKQVDLVSAS (318 aa)) lie on the Extracellular side of the membrane. 3 cysteine pairs are disulfide-bonded: Cys-52–Cys-127, Cys-171–Cys-223, and Cys-270–Cys-315. 2 consecutive Ig-like C2-type domains span residues 148 to 237 (PPLP…QRIT) and 248 to 331 (ASVR…VTVD). Asn-281 carries an N-linked (GlcNAc...) asparagine glycan. A helical transmembrane segment spans residues 350 to 370 (VVVVGVIAALLFCLLVVVVVL). Topologically, residues 371–510 (MSRYHRRKAQ…IYINGRGHLV (140 aa)) are cytoplasmic. Positions 399–412 (RRLHSHHTDPRSQP) are enriched in basic and acidic residues. Disordered regions lie at residues 399-447 (RRLH…SYST) and 457-476 (QTEL…DQDE).

The protein belongs to the nectin family. As to quaternary structure, self-associates. Interacts via its Ig-like V-type domain with NECTIN1 Ig-like V-type domain. Interacts via its C-terminus with AFDN. (Microbial infection) Interacts (via N-terminus) with measles virus hemagglutinin protein. Post-translationally, the soluble form is produced by proteolytic cleavage at the cell surface (shedding), probably by ADAM17/TACE. As to expression, predominantly expressed in placenta. Not detected in normal breast epithelium but expressed in breast carcinoma.

The protein resides in the cell membrane. It localises to the cell junction. Its subcellular location is the adherens junction. The protein localises to the secreted. Its function is as follows. Seems to be involved in cell adhesion through trans-homophilic and -heterophilic interactions, the latter including specifically interactions with NECTIN1. Does not act as receptor for alpha-herpesvirus entry into cells. Functionally, (Microbial infection) Acts as a receptor for measles virus. In Homo sapiens (Human), this protein is Nectin-4.